The primary structure comprises 123 residues: Large ribosomal subunit protein uL14c (123 aa).

This sequence belongs to the universal ribosomal protein uL14 family. In terms of assembly, part of the 50S ribosomal subunit.

The protein resides in the plastid. It localises to the chloroplast. In terms of biological role, binds to 23S rRNA. The polypeptide is Large ribosomal subunit protein uL14c (Brachypodium distachyon (Purple false brome)).